Here is a 432-residue protein sequence, read N- to C-terminus: uncharacterized protein (432 aa).

Residues 223–432 enclose the Cytochrome c domain; sequence ASAVRGEALF…KDLIEYLKTR (210 aa). Residues Cys-236, Cys-239, and His-240 each coordinate heme c.

This is an uncharacterized protein from Sinorhizobium fredii (strain NBRC 101917 / NGR234).